Reading from the N-terminus, the 365-residue chain is Medium chain reductase pydE (365 aa).

Residues 21–362 (KLIDSLPVPP…SKRARGKVLI (342 aa)) form the Enoyl reductase (ER) domain. NADP(+) is bound by residues 185–188 (SGSV), Tyr226, 274–275 (IG), and 354–355 (KR).

This sequence belongs to the zinc-containing alcohol dehydrogenase family. As to quaternary structure, monomer.

It functions in the pathway mycotoxin biosynthesis. Its function is as follows. Medium chain reductase; part of the gene cluster that mediates the biosynthesis of pyrrocidines, fungal natural products containing a macrocyclic para-cyclophane connected to a decahydrofluorene ring system that show potent antibiotic activities toward Gram-negative bacteria. Within the pathway, pydE functions synergistically with pydB, pydX and pydZ to form the cyclophane. The pathway begins with the PKS-NRPS pydA which, with the help of the trans-enoyl reductase pydC, synthesizes the polyketide-tyrosyl acyl thioester product which can be reductively off-loaded by the terminal reductase (R) domain in pydA. The alpha/beta hydrolase pydG is then required to catalyze the subsequent Knoevenagel condensation that affords the 3-pyrrolin-2-one ring, whereas the four proteins pydB, pydE, pydX and pydZ then function synergistically to form the cyclophane. PydB and the membrane-bound pydX and pydZ are lipid-binding proteins that can sequester and mold the pdyG product into the inverse S-shape. Binding of the medium chain reductase pydE to the complex would trigger the cascade oxidative cyclization. PydY is involved in the Diels-Alder cycloaddition that forms the decahydrofluorene core. Additional non-enzymatic hydroxylation yields pyrrocidine A2 which can be further reduced into pyrrocidine B by an endogenous reductase. This Acremonium sp protein is Medium chain reductase pydE.